Consider the following 663-residue polypeptide: DNA ligase (663 aa).

Residues 31 to 35, 80 to 81, and E109 each bind NAD(+); these read DSEYD and SL. The active-site N6-AMP-lysine intermediate is the K111. The NAD(+) site is built by R132, E166, K282, and K306. Zn(2+) contacts are provided by C400, C403, C418, and C423. A BRCT domain is found at 585–663; sequence ELHPVFGEKT…EQMMVDALRN (79 aa).

The protein belongs to the NAD-dependent DNA ligase family. LigA subfamily. Mg(2+) serves as cofactor. Mn(2+) is required as a cofactor.

It carries out the reaction NAD(+) + (deoxyribonucleotide)n-3'-hydroxyl + 5'-phospho-(deoxyribonucleotide)m = (deoxyribonucleotide)n+m + AMP + beta-nicotinamide D-nucleotide.. DNA ligase that catalyzes the formation of phosphodiester linkages between 5'-phosphoryl and 3'-hydroxyl groups in double-stranded DNA using NAD as a coenzyme and as the energy source for the reaction. It is essential for DNA replication and repair of damaged DNA. The chain is DNA ligase from Macrococcus caseolyticus (strain JCSC5402) (Macrococcoides caseolyticum).